Reading from the N-terminus, the 168-residue chain is Photosystem I assembly protein Ycf3 (168 aa).

3 TPR repeats span residues 35–68 (AFTY…EIDP), 72–105 (SYIL…NPFL), and 120–153 (GEQA…TPGN).

The protein belongs to the Ycf3 family.

Its subcellular location is the plastid. The protein resides in the chloroplast thylakoid membrane. Functionally, essential for the assembly of the photosystem I (PSI) complex. May act as a chaperone-like factor to guide the assembly of the PSI subunits. The polypeptide is Photosystem I assembly protein Ycf3 (Nandina domestica (Heavenly bamboo)).